Here is a 372-residue protein sequence, read N- to C-terminus: tRNA-specific 2-thiouridylase MnmA (372 aa).

ATP is bound by residues 9–16 and Met35; that span reads GMSGGVDS. The tract at residues 95–97 is interaction with target base in tRNA; the sequence is NPD. Catalysis depends on Cys100, which acts as the Nucleophile. Cys100 and Cys201 form a disulfide bridge. An ATP-binding site is contributed by Gly124. An interaction with tRNA region spans residues 151-153; the sequence is KDQ. The Cysteine persulfide intermediate role is filled by Cys201. The tract at residues 317–318 is interaction with tRNA; the sequence is RY.

It belongs to the MnmA/TRMU family.

It localises to the cytoplasm. It catalyses the reaction S-sulfanyl-L-cysteinyl-[protein] + uridine(34) in tRNA + AH2 + ATP = 2-thiouridine(34) in tRNA + L-cysteinyl-[protein] + A + AMP + diphosphate + H(+). Functionally, catalyzes the 2-thiolation of uridine at the wobble position (U34) of tRNA, leading to the formation of s(2)U34. The sequence is that of tRNA-specific 2-thiouridylase MnmA from Herminiimonas arsenicoxydans.